The primary structure comprises 254 residues: Alcohol dehydrogenase (254 aa).

Residue 10–33 (FVAGLGGIGLDTSRELVKRDLKNL) participates in NAD(+) binding. Position 138 (Ser138) interacts with substrate. Tyr151 serves as the catalytic Proton acceptor.

It belongs to the short-chain dehydrogenases/reductases (SDR) family. As to quaternary structure, homodimer.

It catalyses the reaction a primary alcohol + NAD(+) = an aldehyde + NADH + H(+). It carries out the reaction a secondary alcohol + NAD(+) = a ketone + NADH + H(+). This is Alcohol dehydrogenase (Adh) from Drosophila madeirensis (Fruit fly).